Reading from the N-terminus, the 160-residue chain is Non-secretory ribonuclease (160 aa).

A signal peptide spans methionine 1–alanine 27. Tryptophan 34 is a glycosylation site (C-linked (Man) tryptophan). Histidine 42 serves as the catalytic Proton acceptor. A glycan (N-linked (GlcNAc...) asparagine) is linked at asparagine 44. 4 disulfides stabilise this stretch: cysteine 50-cysteine 110, cysteine 64-cysteine 122, cysteine 82-cysteine 137, and cysteine 89-cysteine 98. Tyrosine 60 bears the 3'-nitrotyrosine mark. Lysine 65 to threonine 69 serves as a coordination point for substrate. N-linked (GlcNAc...) asparagine glycosylation is found at asparagine 92, asparagine 111, and asparagine 138. Histidine 155 (proton donor) is an active-site residue.

Belongs to the pancreatic ribonuclease family. As to quaternary structure, interacts with and forms a tight 1:1 complex with RNH1. Dimerization of two such complexes may occur.

Its subcellular location is the lysosome. It is found in the cytoplasmic granule. It catalyses the reaction an [RNA] containing cytidine + H2O = an [RNA]-3'-cytidine-3'-phosphate + a 5'-hydroxy-ribonucleotide-3'-[RNA].. The enzyme catalyses an [RNA] containing uridine + H2O = an [RNA]-3'-uridine-3'-phosphate + a 5'-hydroxy-ribonucleotide-3'-[RNA].. In terms of biological role, this is a non-secretory ribonuclease. It is a pyrimidine specific nuclease with a slight preference for U. Cytotoxin and helminthotoxin. Possesses a wide variety of biological activities. This chain is Non-secretory ribonuclease (RNASE2), found in Macaca nemestrina (Pig-tailed macaque).